A 162-amino-acid polypeptide reads, in one-letter code: Autophagy-related protein 8 (162 aa).

Residues 1 to 27 are compositionally biased toward basic and acidic residues; the sequence is MRSKFKDEHPFEKRKAEAERIRQKYSD. The interval 1 to 42 is disordered; it reads MRSKFKDEHPFEKRKAEAERIRQKYSDRIPPSPHSPASRLIG. A lipid anchor (Phosphatidylethanolamine amidated glycine) is attached at Gly157. The propeptide at 158–162 is removed in mature form; the sequence is GFETA.

This sequence belongs to the ATG8 family.

The protein localises to the cytoplasmic vesicle. It is found in the autophagosome membrane. It localises to the vacuole membrane. Its function is as follows. Ubiquitin-like modifier involved in autophagosome formation. With ATG4, mediates the delivery of the autophagosomes to the vacuole via the microtubule cytoskeleton. Required for selective autophagic degradation of the nucleus (nucleophagy) as well as for mitophagy which contributes to regulate mitochondrial quantity and quality by eliminating the mitochondria to a basal level to fulfill cellular energy requirements and preventing excess ROS production. Also participates in membrane fusion events that take place in the early secretory pathway. Also involved in endoplasmic reticulum-specific autophagic process and is essential for the survival of cells subjected to severe ER stress. The ATG8-PE conjugate mediates tethering between adjacent membranes and stimulates membrane hemifusion, leading to expansion of the autophagosomal membrane during autophagy. The polypeptide is Autophagy-related protein 8 (Colletotrichum higginsianum (strain IMI 349063) (Crucifer anthracnose fungus)).